Reading from the N-terminus, the 151-residue chain is Class I hydrophobin A (151 aa).

The N-terminal stretch at 1-17 (MQFSVAAVLALATAVAA) is a signal peptide. Cystine bridges form between cysteine 52-cysteine 125, cysteine 60-cysteine 119, cysteine 61-cysteine 101, and cysteine 126-cysteine 144.

Belongs to the fungal hydrophobin family. As to quaternary structure, interacts with cutinase cutL1 in a pH-dependent manner. Self-assembles to form functional amyloid fibrils called rodlets. Self-assembly into fibrillar rodlets occurs spontaneously at hydrophobic:hydrophilic interfaces and the rodlets further associate laterally to form amphipathic monolayers. rolA rodlet formation is regulated by the strength of ionic interactions between rolA molecules. Three types of self-assembled structures of rolA are observed: spherical, rod-like, and mesh-like.

It localises to the secreted. Its subcellular location is the cell wall. In terms of biological role, aerial growth, conidiation, and dispersal of filamentous fungi in the environment rely upon a capability of their secreting small amphipathic proteins called hydrophobins (HPBs) with low sequence identity. Class I can self-assemble into an outermost layer of rodlet bundles on aerial cell surfaces, conferring cellular hydrophobicity that supports fungal growth, development and dispersal; whereas Class II form highly ordered films at water-air interfaces through intermolecular interactions but contribute nothing to the rodlet structure. RolA is a class I hydrophobin that undergoes a conformational change after its adsorption to hydrophobic surfaces such as the biodegradable polyester polybutylene succinate-coadipate (PBSA) and recruits the cutinase cutL1, resulting in condensation of cutL1 on the PBSA surface and consequent stimulation of PBSA hydrolysis. Increases also the activity of polyethylene terephthalate hydrolase (PETase) that hydrolyzes polyethylene terephthalate (PET), one of the most well-known polyesters that is widely used as packaging material, when the PET samples are preincubated with the hydrophobin. The wetting effect of rolA probably acts on PET surface to become hydrophilic, which leads PETase easier to contact and attack the surface. The sequence is that of Class I hydrophobin A from Aspergillus oryzae (strain ATCC 42149 / RIB 40) (Yellow koji mold).